The chain runs to 124 residues: Holo-[acyl-carrier-protein] synthase (124 aa).

Mg(2+)-binding residues include aspartate 7 and glutamate 55.

This sequence belongs to the P-Pant transferase superfamily. AcpS family. The cofactor is Mg(2+).

Its subcellular location is the cytoplasm. The enzyme catalyses apo-[ACP] + CoA = holo-[ACP] + adenosine 3',5'-bisphosphate + H(+). Transfers the 4'-phosphopantetheine moiety from coenzyme A to a Ser of acyl-carrier-protein. In Borreliella afzelii (strain PKo) (Borrelia afzelii), this protein is Holo-[acyl-carrier-protein] synthase.